The following is a 562-amino-acid chain: Arf-GAP domain and FG repeat-containing protein 1 (562 aa).

Residues 11–135 (EKHLKMLRDM…WYVPPEQAKV (125 aa)) form the Arf-GAP domain. The segment at 29–52 (CFDCDQRGPTYVNMTVGSFVCTSC) adopts a C4-type zinc-finger fold. Serine 167 carries the phosphoserine modification. Residues 168 to 194 (APALHLNKGTPSQSPVVGRSQAQQQEK) are disordered. Over residues 176 to 191 (GTPSQSPVVGRSQAQQ) the composition is skewed to polar residues. Threonine 177 carries the post-translational modification Phosphothreonine. Serine 181 and serine 362 each carry phosphoserine. Serine 367 carries an O-linked (GlcNAc) serine glycan.

Interacts with EPS15R and EPS15. Interacts with FCHO1. In terms of processing, O-glycosylated.

The protein resides in the nucleus. It is found in the cytoplasmic vesicle. Functionally, required for vesicle docking or fusion during acrosome biogenesis. May play a role in RNA trafficking or localization. The polypeptide is Arf-GAP domain and FG repeat-containing protein 1 (AGFG1) (Bos taurus (Bovine)).